The chain runs to 467 residues: Na(+)/H(+) exchange regulatory cofactor-like protein nrfl-1 (467 aa).

PDZ domains follow at residues 12–94 (RLCV…ISEE) and 143–225 (LAEL…ASED). The tract at residues 344-429 (MSSHTEVLPP…ASSTSGYDDD (86 aa)) is disordered. The span at 407–425 (PSPLSNGSSHGYAASSTSG) shows a compositional bias: polar residues.

As to quaternary structure, interacts (via PDZ 2 domain) with aat-6 (via PDZ-binding motif); the interaction sequesters aat-6 to the apical cell membrane of intestinal cells. In terms of processing, phosphorylated. Expressed in the excretory canal and intestine. Expressed on the apical cell membrane of intestinal cells (at protein level).

It is found in the cell projection. The protein localises to the microvillus membrane. Its subcellular location is the apical cell membrane. Functionally, scaffold protein that connects plasma membrane proteins with members of the ezrin/moesin/radixin family and thereby helps to link them to the actin cytoskeleton and to regulate their surface expression. Anchors the amino acid transporter protein aat-6 to the apical cell membrane of intestinal cells, particularly in older animals, in order to maintain amino acid homeostasis. May play a role in promoting fertility. The protein is Na(+)/H(+) exchange regulatory cofactor-like protein nrfl-1 of Caenorhabditis elegans.